Reading from the N-terminus, the 859-residue chain is Linoleate 9S-lipoxygenase B (859 aa).

Residues Ile-34–Ala-158 form the PLAT domain. Residues Ala-161–Ile-859 enclose the Lipoxygenase domain. Positions Glu-213–Ser-246 are disordered. A compositionally biased stretch (basic and acidic residues) spans Thr-233–Cys-244. Residues His-521, His-526, His-711, and Ile-859 each coordinate Fe cation.

Belongs to the lipoxygenase family. As to quaternary structure, monomer. Requires Fe cation as cofactor. Fruit specific.

The protein resides in the cytoplasm. It catalyses the reaction (9Z,12Z)-octadecadienoate + O2 = (9S)-hydroperoxy-(10E,12Z)-octadecadienoate. It participates in lipid metabolism; oxylipin biosynthesis. In terms of biological role, plant lipoxygenase may be involved in a number of diverse aspects of plant physiology including growth and development, pest resistance, and senescence or responses to wounding. It catalyzes the hydroperoxidation of lipids containing a cis,cis-1,4-pentadiene structure. This chain is Linoleate 9S-lipoxygenase B (LOX1.2), found in Solanum lycopersicum (Tomato).